Reading from the N-terminus, the 405-residue chain is Plasma serine protease inhibitor (405 aa).

The N-terminal stretch at 1 to 19 (MRFFPILCLVLFISHGVAS) is a signal peptide. Positions 20 to 24 (RRHSH) are cleaved as a propeptide — removed in mature form. A glycan (N-linked (GlcNAc...) asparagine) is linked at Asn-247.

This sequence belongs to the serpin family. As to quaternary structure, forms protease inhibiting heterodimers in extracellular body fluids with serine proteases such as activated protein C/coagulation factor V/F5, acrosin/ACR, chymotrypsinogen B/CTRB1, prothrombin/F2, factor Xa/F10, factor XI/F11, kallikrein/KLKB1, tissue kallikrein, trypsin/PRSS1, prostate specific antigen/KLK3, tissue plasminogen activator/PLAT and urinary plasminogen activator/PLAU. Forms membrane-anchored serine proteases inhibiting heterodimers with TMPRSS7 and TMPRSS11E. Interacts with SEMG2. N-glycosylated; glycans consist of a mixture of sialylated bi- (including sialyl-Lewis X epitopes), tri- and tetra-antennary complex-type chains; affects the maximal heparin- and thrombomodulin-enhanced rates of thrombin inhibition. O-glycosylated; further modified with 2 sialic acid residues. Proteolytically cleaved at the N-terminus; inhibits slightly the heparin- and thrombomodulin-enhanced rates of thrombin inhibition. In terms of processing, proteolytically cleaved. Inhibition of proteases is accompanied by formation of a stable enzyme-inhibitor complex and by degradation of the serpin to lower molecular weight derivatives. In terms of tissue distribution, not detected in blood plasma (at protein level). Expressed in testis, epididymis, seminal vesicles, prostate and ovaries.

It is found in the secreted. The protein resides in the extracellular space. Its inhibitory activity is greatly enhanced in the presence of glycosaminoglycans, heparin, thrombomodulin and phospholipids vesicles. In terms of biological role, heparin-dependent serine protease inhibitor acting in body fluids and secretions. Inactivates serine proteases by binding irreversibly to their serine activation site. Involved in the regulation of intravascular and extravascular proteolytic activities. Plays hemostatic roles in the blood plasma. Acts as a procoagulant and pro-inflammatory factor by inhibiting the anticoagulant activated protein C factor as well as the generation of activated protein C factor by the thrombin/thrombomodulin complex. Acts as an anticoagulant factor by inhibiting blood coagulation factors like prothrombin, factor XI, factor Xa, plasma kallikrein and fibrinolytic enzymes such as tissue- and urinary-type plasminogen activators. In seminal plasma, inactivates several serine proteases implicated in the reproductive system. Inhibits the serpin acrosin; indirectly protects component of the male genital tract from being degraded by excessive released acrosin. Inhibits tissue- and urinary-type plasminogen activator, prostate-specific antigen and kallikrein activities; has a control on the sperm motility and fertilization. Inhibits the activated protein C-catalyzed degradation of SEMG1 and SEMG2; regulates the degradation of semenogelin during the process of transfer of spermatozoa from the male reproductive tract into the female tract. In urine, inhibits urinary-type plasminogen activator and kallikrein activities. Inactivates membrane-anchored serine proteases activities such as MPRSS7 and TMPRSS11E. Inhibits urinary-type plasminogen activator-dependent tumor cell invasion and metastasis. May also play a non-inhibitory role in seminal plasma and urine as a hydrophobic hormone carrier by its binding to retinoic acid. The polypeptide is Plasma serine protease inhibitor (Serpina5) (Mus musculus (Mouse)).